A 337-amino-acid chain; its full sequence is Protein-glutamate methylesterase/protein-glutamine glutaminase of group 3 operon (337 aa).

Residues 2 to 119 (KIAIVNDMPL…GDAREAAAPL (118 aa)) enclose the Response regulatory domain. The residue at position 53 (aspartate 53) is a 4-aspartylphosphate. Residues 144–337 (PLREASQRRG…AGRLTEFFAK (194 aa)) form the CheB-type methylesterase domain. Catalysis depends on residues serine 160, histidine 187, and aspartate 280.

It belongs to the CheB family. In terms of processing, phosphorylated by CheA. Phosphorylation of the N-terminal regulatory domain activates the methylesterase activity.

The protein localises to the cytoplasm. It catalyses the reaction [protein]-L-glutamate 5-O-methyl ester + H2O = L-glutamyl-[protein] + methanol + H(+). It carries out the reaction L-glutaminyl-[protein] + H2O = L-glutamyl-[protein] + NH4(+). Its function is as follows. Involved in chemotaxis. Part of a chemotaxis signal transduction system that modulates chemotaxis in response to various stimuli. Catalyzes the demethylation of specific methylglutamate residues introduced into the chemoreceptors (methyl-accepting chemotaxis proteins or MCP) by CheR. Also mediates the irreversible deamidation of specific glutamine residues to glutamic acid. The sequence is that of Protein-glutamate methylesterase/protein-glutamine glutaminase of group 3 operon from Pseudomonas putida (strain ATCC 47054 / DSM 6125 / CFBP 8728 / NCIMB 11950 / KT2440).